The following is a 396-amino-acid chain: Elongation factor Tu (396 aa).

Positions 11-205 constitute a tr-type G domain; it reads KPHVNIGTIG…TVDEYIPTPE (195 aa). The segment at 20 to 27 is G1; it reads GHVDHGKT. GTP is bound at residue 20 to 27; the sequence is GHVDHGKT. Thr-27 serves as a coordination point for Mg(2+). The segment at 61–65 is G2; the sequence is GITIN. Residues 82-85 form a G3 region; that stretch reads DAPG. Residues 82–86 and 137–140 each bind GTP; these read DAPGH and NKCD. Positions 137-140 are G4; it reads NKCD. Residues 175 to 177 form a G5 region; that stretch reads SAL.

It belongs to the TRAFAC class translation factor GTPase superfamily. Classic translation factor GTPase family. EF-Tu/EF-1A subfamily. Monomer.

It localises to the cytoplasm. It catalyses the reaction GTP + H2O = GDP + phosphate + H(+). GTP hydrolase that promotes the GTP-dependent binding of aminoacyl-tRNA to the A-site of ribosomes during protein biosynthesis. The polypeptide is Elongation factor Tu (Lactobacillus helveticus (strain DPC 4571)).